The primary structure comprises 580 residues: G1/S-specific cyclin CLN3 (580 aa).

A compositionally biased stretch (low complexity) spans 454–469 (FTPTSSSSSPSPFNSP). Disordered regions lie at residues 454-498 (FTPT…QNSF) and 546-580 (MATA…KKTR). Polar residues-rich tracts occupy residues 470 to 480 (YKTSSSMTTPD) and 563 to 580 (TSSV…KKTR).

This sequence belongs to the cyclin family.

Functionally, essential for the control of the cell cycle at the G1/S (start) transition. CLN3 may be an upstream activator of the G1 cyclins which directly catalyze start. This is G1/S-specific cyclin CLN3 (CLN3) from Saccharomyces cerevisiae (strain ATCC 204508 / S288c) (Baker's yeast).